The primary structure comprises 811 residues: LPS-assembly protein LptD (811 aa).

Residues 1-17 (MTEPNRARKTRQRTAFA) form the signal peptide. Residues 1-22 (MTEPNRARKTRQRTAFAAPDQR) form a disordered region.

The protein belongs to the LptD family. As to quaternary structure, component of the lipopolysaccharide transport and assembly complex. Interacts with LptE and LptA.

The protein localises to the cell outer membrane. In terms of biological role, together with LptE, is involved in the assembly of lipopolysaccharide (LPS) at the surface of the outer membrane. The polypeptide is LPS-assembly protein LptD (Ralstonia nicotianae (strain ATCC BAA-1114 / GMI1000) (Ralstonia solanacearum)).